Here is a 176-residue protein sequence, read N- to C-terminus: Ribosome rescue factor SmrB (176 aa).

One can recognise a Smr domain in the interval 97 to 172 (LDMHGMTQQE…GNGALLVLID (76 aa)).

This sequence belongs to the SmrB family. Associates with collided ribosomes, but not with correctly translating polysomes.

Acts as a ribosome collision sensor. Detects stalled/collided disomes (pairs of ribosomes where the leading ribosome is stalled and a second ribosome has collided with it) and endonucleolytically cleaves mRNA at the 5' boundary of the stalled ribosome. Stalled/collided disomes form a new interface (primarily via the 30S subunits) that binds SmrB. Cleaved mRNA becomes available for tmRNA ligation, leading to ribosomal subunit dissociation and rescue of stalled ribosomes. The protein is Ribosome rescue factor SmrB of Photobacterium profundum (strain SS9).